Here is a 426-residue protein sequence, read N- to C-terminus: Formyl-CoA:oxalate CoA-transferase (426 aa).

CoA contacts are provided by residues 17–18 (QS), Arg-38, 72–75 (LDTK), 96–98 (NFG), Arg-104, and 136–139 (KVYE). Asp-168 serves as the catalytic Nucleophile. 247–249 (GGQ) serves as a coordination point for substrate.

It belongs to the CoA-transferase III family. Frc subfamily. Homodimer.

The enzyme catalyses formyl-CoA + oxalate = oxalyl-CoA + formate. Its pathway is metabolic intermediate degradation; oxalate degradation; CO(2) and formate from oxalate: step 1/2. Functionally, involved in the catabolism of oxalate and in the adapatation to low pH via the induction of the oxalate-dependent acid tolerance response (ATR). Catalyzes the transfer of the CoA moiety from formyl-CoA to oxalate. The polypeptide is Formyl-CoA:oxalate CoA-transferase (Rhodopseudomonas palustris (strain BisB18)).